A 1121-amino-acid chain; its full sequence is tRNA (34-2'-O)-methyltransferase regulator WDR6 (1121 aa).

At Met-1 the chain carries N-acetylmethionine. WD repeat units follow at residues 53–97, 105–143, 147–189, 200–238, 247–285, 289–327, 335–376, 381–422, 425–470, 476–520, 559–598, 604–642, 645–684, 739–785, 848–893, 901–946, 970–1012, 1036–1073, and 1079–1121; these read IKRV…VVKI, WELW…LYDP, CILQ…VWYP, APDR…IWKV, RVQN…VWSH, ILQA…LWHL, LGVS…LYDV, WEQL…VVPI, PTAA…ISAA, IFVK…LFPS, PVST…FVRD, VLRQ…VWNP, HEKL…LYRA, LTDI…VWGI, RNRH…LFLL, QLLA…FWDL, GTPS…VFVL, EEYS…FWRL, and TFMN…NWYD.

The protein belongs to the WD repeat WDR6 family. In terms of assembly, interacts with FTSJ1; the interaction is direct, and required for 2'-O-methylation of position 34 in substrate tRNAs. Interacts with IRS4. Interacts with STK11/LKB1. Ubiquitous.

It is found in the cytoplasm. In terms of biological role, together with methyltransferase FTSJ1, methylates the 2'-O-ribose of nucleotides at position 34 of the tRNA anticodon loop of substrate tRNAs. Required for the correct positioning of the substrate tRNA for methylation. Required to suppress amino acid starvation-induced autophagy. Enhances the STK11/LKB1-induced cell growth suppression activity. The polypeptide is tRNA (34-2'-O)-methyltransferase regulator WDR6 (WDR6) (Homo sapiens (Human)).